A 122-amino-acid chain; its full sequence is uncharacterized protein (122 aa).

Positions 46–116 (KDLQKEVDDL…HQLENKRELN (71 aa)) form a coiled coil.

This is an uncharacterized protein from Invertebrate iridescent virus 6 (IIV-6).